The chain runs to 129 residues: Small ribosomal subunit protein uS12 (129 aa).

Residues 1-25 form a disordered region; that stretch reads MPTYNQLVRFGRKSKTRKTKSPALE. The span at 10-20 shows a compositional bias: basic residues; the sequence is FGRKSKTRKTK. A 3-methylthioaspartic acid modification is found at D89. The disordered stretch occupies residues 109–129; sequence GRKQGRSRYGTPRKQVAVTKK.

Belongs to the universal ribosomal protein uS12 family. Part of the 30S ribosomal subunit. Contacts proteins S8 and S17. May interact with IF1 in the 30S initiation complex.

In terms of biological role, with S4 and S5 plays an important role in translational accuracy. Functionally, interacts with and stabilizes bases of the 16S rRNA that are involved in tRNA selection in the A site and with the mRNA backbone. Located at the interface of the 30S and 50S subunits, it traverses the body of the 30S subunit contacting proteins on the other side and probably holding the rRNA structure together. The combined cluster of proteins S8, S12 and S17 appears to hold together the shoulder and platform of the 30S subunit. The protein is Small ribosomal subunit protein uS12 of Rickettsia peacockii (strain Rustic).